A 939-amino-acid chain; its full sequence is Probable importin ECU10_0620 (939 aa).

An Importin N-terminal domain is found at 23–90 (AEAMLMDLEK…VENILDLFLY (68 aa)).

Belongs to the importin beta family.

The protein resides in the nucleus. The protein localises to the cytoplasm. In terms of biological role, active in protein import into the nucleus. The protein is Probable importin ECU10_0620 of Encephalitozoon cuniculi (strain GB-M1) (Microsporidian parasite).